The following is a 346-amino-acid chain: Sensor histidine kinase GraS (346 aa).

Helical transmembrane passes span 15–35 (MNWIFWILFLNFLMLGISLID) and 43–63 (LFYIVSLNLSLTMIFLLLTYF). In terms of domain architecture, Histidine kinase spans 126–332 (EFVHDIKTPV…TVRLIFPLQN (207 aa)).

In terms of assembly, interacts with GraX.

Its subcellular location is the cell membrane. The enzyme catalyses ATP + protein L-histidine = ADP + protein N-phospho-L-histidine.. Member of the two-component regulatory system GraR/GraS involved in resistance against cationic antimicrobial peptides (CAMPs). Functions as a sensor protein kinase which phosphorylates GraR through the auxiliary protein GraX. In turn, GraR up-regulates many genes such as adhesins, exoproteins, transporters, toxins, and proteins involved in cell wall synthesis. Down-regulates the expression of many genes involved in RNA and amino acid synthesis or glycolysis. The sequence is that of Sensor histidine kinase GraS (graS) from Staphylococcus aureus (strain COL).